The primary structure comprises 293 residues: N-acetylneuraminate lyase (293 aa).

Residues Ser-47, Thr-48, and Tyr-136 each coordinate aceneuramate. Residue Tyr-136 is the Proton donor of the active site. Lys-164 serves as the catalytic Schiff-base intermediate with substrate. The aceneuramate site is built by Thr-166, Gly-188, Asp-190, Glu-191, Ser-207, and Tyr-251.

Belongs to the DapA family. NanA subfamily. In terms of assembly, homotetramer.

The protein resides in the cytoplasm. The catalysed reaction is aceneuramate = aldehydo-N-acetyl-D-mannosamine + pyruvate. It participates in amino-sugar metabolism; N-acetylneuraminate degradation; D-fructose 6-phosphate from N-acetylneuraminate: step 1/5. Its function is as follows. Catalyzes the reversible aldol cleavage of N-acetylneuraminic acid (sialic acid; Neu5Ac) to form pyruvate and N-acetylmannosamine (ManNAc) via a Schiff base intermediate. This Pasteurella multocida (strain Pm70) protein is N-acetylneuraminate lyase.